Consider the following 313-residue polypeptide: tRNA dimethylallyltransferase (313 aa).

10 to 17 (GPTASGKT) contacts ATP. Substrate is bound at residue 12–17 (TASGKT). 3 interaction with substrate tRNA regions span residues 35 to 38 (DSAM), 159 to 163 (QRIQR), and 240 to 245 (RCVGYR).

Belongs to the IPP transferase family. Monomer. Requires Mg(2+) as cofactor.

It catalyses the reaction adenosine(37) in tRNA + dimethylallyl diphosphate = N(6)-dimethylallyladenosine(37) in tRNA + diphosphate. In terms of biological role, catalyzes the transfer of a dimethylallyl group onto the adenine at position 37 in tRNAs that read codons beginning with uridine, leading to the formation of N6-(dimethylallyl)adenosine (i(6)A). In Legionella pneumophila (strain Corby), this protein is tRNA dimethylallyltransferase.